Consider the following 456-residue polypeptide: Methylenetetrahydrofolate--tRNA-(uracil-5-)-methyltransferase TrmFO (456 aa).

12 to 17 (GGGLAG) is an FAD binding site.

Belongs to the MnmG family. TrmFO subfamily. The cofactor is FAD.

It localises to the cytoplasm. The catalysed reaction is uridine(54) in tRNA + (6R)-5,10-methylene-5,6,7,8-tetrahydrofolate + NADH + H(+) = 5-methyluridine(54) in tRNA + (6S)-5,6,7,8-tetrahydrofolate + NAD(+). It catalyses the reaction uridine(54) in tRNA + (6R)-5,10-methylene-5,6,7,8-tetrahydrofolate + NADPH + H(+) = 5-methyluridine(54) in tRNA + (6S)-5,6,7,8-tetrahydrofolate + NADP(+). Functionally, catalyzes the folate-dependent formation of 5-methyl-uridine at position 54 (M-5-U54) in all tRNAs. The sequence is that of Methylenetetrahydrofolate--tRNA-(uracil-5-)-methyltransferase TrmFO from Picosynechococcus sp. (strain ATCC 27264 / PCC 7002 / PR-6) (Agmenellum quadruplicatum).